Reading from the N-terminus, the 330-residue chain is Acrylyl-CoA reductase AcuI (330 aa).

Residues Tyr-44, 159–162 (AGGV), 181–183 (TGR), Arg-201, Leu-247, and Ser-272 each bind NADP(+).

Belongs to the zinc-containing alcohol dehydrogenase family. Acrylyl-CoA reductase subfamily. Homodimer.

It is found in the cytoplasm. It carries out the reaction propanoyl-CoA + NADP(+) = acryloyl-CoA + NADPH + H(+). Probably catalyzes the NADPH-dependent reduction of acrylyl-CoA to propanoyl-CoA. Restores acrylate resistance when expressed in an E.coli strain K12 acuI deletion. The polypeptide is Acrylyl-CoA reductase AcuI (acuI) (Ruegeria pomeroyi (strain ATCC 700808 / DSM 15171 / DSS-3) (Silicibacter pomeroyi)).